Consider the following 1439-residue polypeptide: Fanconi anemia group A protein homolog (1439 aa).

Residues 1–20 form a disordered region; the sequence is MPGSPARGAAMGGGPRGLRK. The Nuclear localization signal motif lies at 19 to 35; sequence RKTWTELLAGRVKKQKY.

As to quaternary structure, belongs to the multisubunit FA complex composed of FANCA, FANCB, FANCC, FANCE, FANCF, FANCG, FANCL/PHF9 and FANCM. In complex with FANCF, FANCG and FANCL, but not with FANCC, nor FANCE, interacts with HES1; this interaction may be essential for the stability and nuclear localization of FA core complex proteins. The complex with FANCC and FANCG may also include EIF2AK2 and HSP70. Interacts with FAAP20; interaction is direct. Post-translationally, phosphorylated primarily on serine residues. Phosphorylation is required for the formation of the nuclear complex. Mainly expressed in testis and lymphoid tissues like thymus, lymph nodes, and spleen, and at lower levels in kidney and ovary.

The protein localises to the nucleus. The protein resides in the cytoplasm. In terms of biological role, DNA repair protein that may operate in a postreplication repair or a cell cycle checkpoint function. May be involved in interstrand DNA cross-link repair and in the maintenance of normal chromosome stability. In Mus musculus (Mouse), this protein is Fanconi anemia group A protein homolog (Fanca).